The following is a 343-amino-acid chain: tRNA N6-adenosine threonylcarbamoyltransferase (343 aa).

Fe cation-binding residues include H108 and H112. Substrate-binding positions include 129–133 (LISGG), D161, E178, and S258. D286 serves as a coordination point for Fe cation.

The protein belongs to the KAE1 / TsaD family. Fe(2+) serves as cofactor.

Its subcellular location is the cytoplasm. It catalyses the reaction L-threonylcarbamoyladenylate + adenosine(37) in tRNA = N(6)-L-threonylcarbamoyladenosine(37) in tRNA + AMP + H(+). In terms of biological role, required for the formation of a threonylcarbamoyl group on adenosine at position 37 (t(6)A37) in tRNAs that read codons beginning with adenine. Is probably involved in the transfer of the threonylcarbamoyl moiety of threonylcarbamoyl-AMP (TC-AMP) to the N6 group of A37. The chain is tRNA N6-adenosine threonylcarbamoyltransferase from Pyrobaculum aerophilum (strain ATCC 51768 / DSM 7523 / JCM 9630 / CIP 104966 / NBRC 100827 / IM2).